A 252-amino-acid chain; its full sequence is Tumor necrosis factor ligand superfamily member 15 (252 aa).

The Cytoplasmic segment spans residues 1 to 39 (MAEELGLGFGEAVPVEMLPEGCRHRREARTGLAARSKAC). The helical; Signal-anchor for type II membrane protein transmembrane segment at 40–60 (LALTCCLLSFPILAGLSTLLM) threads the bilayer. Over 61-252 (TGQLRIPGKD…DKTFFGAFLI (192 aa)) the chain is Extracellular. Positions 96–252 (PKAHLTIMRQ…DKTFFGAFLI (157 aa)) constitute a THD domain. Asn134 is a glycosylation site (N-linked (GlcNAc...) asparagine). Cys163 and Cys203 form a disulfide bridge. The N-linked (GlcNAc...) asparagine glycan is linked to Asn230.

This sequence belongs to the tumor necrosis factor family. In terms of assembly, homotrimer.

It is found in the membrane. Its function is as follows. Receptor for TNFRSF25 and TNFRSF6B. Mediates activation of NF-kappa-B. Inhibits vascular endothelial growth and angiogenesis (in vitro). Promotes activation of caspases and apoptosis. Promotes splenocyte alloactivation. This chain is Tumor necrosis factor ligand superfamily member 15 (Tnfsf15), found in Rattus norvegicus (Rat).